We begin with the raw amino-acid sequence, 572 residues long: Urocanate hydratase (572 aa).

Residues 48-49 (GG), glutamine 126, 172-174 (GMG), aspartate 192, 238-239 (NA), 259-263 (QTSAH), 268-269 (YL), and tyrosine 317 each bind NAD(+). The active site involves cysteine 405. Glycine 487 provides a ligand contact to NAD(+). Positions 550–559 (EGDEAHEGDA) are enriched in basic and acidic residues. A disordered region spans residues 550–572 (EGDEAHEGDAAHGSGAAREGDGV).

This sequence belongs to the urocanase family. NAD(+) serves as cofactor.

It localises to the cytoplasm. The catalysed reaction is 4-imidazolone-5-propanoate = trans-urocanate + H2O. The protein operates within amino-acid degradation; L-histidine degradation into L-glutamate; N-formimidoyl-L-glutamate from L-histidine: step 2/3. Catalyzes the conversion of urocanate to 4-imidazolone-5-propionate. The chain is Urocanate hydratase from Streptomyces coelicolor (strain ATCC BAA-471 / A3(2) / M145).